The following is a 366-amino-acid chain: Beta sliding clamp (366 aa).

Belongs to the beta sliding clamp family. As to quaternary structure, forms a ring-shaped head-to-tail homodimer around DNA which binds and tethers DNA polymerases and other proteins to the DNA. The DNA replisome complex has a single clamp-loading complex (3 tau and 1 each of delta, delta', psi and chi subunits) which binds 3 Pol III cores (1 core on the leading strand and 2 on the lagging strand) each with a beta sliding clamp dimer. Additional proteins in the replisome are other copies of gamma, psi and chi, Ssb, DNA helicase and RNA primase.

Its subcellular location is the cytoplasm. Confers DNA tethering and processivity to DNA polymerases and other proteins. Acts as a clamp, forming a ring around DNA (a reaction catalyzed by the clamp-loading complex) which diffuses in an ATP-independent manner freely and bidirectionally along dsDNA. Initially characterized for its ability to contact the catalytic subunit of DNA polymerase III (Pol III), a complex, multichain enzyme responsible for most of the replicative synthesis in bacteria; Pol III exhibits 3'-5' exonuclease proofreading activity. The beta chain is required for initiation of replication as well as for processivity of DNA replication. The polypeptide is Beta sliding clamp (dnaN) (Chlamydia pneumoniae (Chlamydophila pneumoniae)).